A 242-amino-acid polypeptide reads, in one-letter code: Pyridoxine 5'-phosphate synthase (242 aa).

Asparagine 7 contributes to the 3-amino-2-oxopropyl phosphate binding site. Residue 9–10 (DH) participates in 1-deoxy-D-xylulose 5-phosphate binding. Arginine 18 contributes to the 3-amino-2-oxopropyl phosphate binding site. Histidine 44 functions as the Proton acceptor in the catalytic mechanism. Residues arginine 46 and histidine 51 each coordinate 1-deoxy-D-xylulose 5-phosphate. The Proton acceptor role is filled by glutamate 71. A 1-deoxy-D-xylulose 5-phosphate-binding site is contributed by threonine 101. Histidine 192 acts as the Proton donor in catalysis. Residues glycine 193 and 214 to 215 (GH) each bind 3-amino-2-oxopropyl phosphate.

The protein belongs to the PNP synthase family. Homooctamer; tetramer of dimers.

It localises to the cytoplasm. The enzyme catalyses 3-amino-2-oxopropyl phosphate + 1-deoxy-D-xylulose 5-phosphate = pyridoxine 5'-phosphate + phosphate + 2 H2O + H(+). It participates in cofactor biosynthesis; pyridoxine 5'-phosphate biosynthesis; pyridoxine 5'-phosphate from D-erythrose 4-phosphate: step 5/5. Catalyzes the complicated ring closure reaction between the two acyclic compounds 1-deoxy-D-xylulose-5-phosphate (DXP) and 3-amino-2-oxopropyl phosphate (1-amino-acetone-3-phosphate or AAP) to form pyridoxine 5'-phosphate (PNP) and inorganic phosphate. The chain is Pyridoxine 5'-phosphate synthase from Synechocystis sp. (strain ATCC 27184 / PCC 6803 / Kazusa).